The chain runs to 484 residues: Aldehyde dehydrogenase family 3 member A2 (484 aa).

The Cytoplasmic portion of the chain corresponds to Met-1 to Arg-463. Gly-185 to Gly-190 is an NAD(+) binding site. Active-site residues include Glu-207 and Cys-241. The residue at position 293 (Ser-293) is a Phosphoserine. A helical membrane pass occupies residues Leu-464–Leu-484. The short motif at Lys-481–Leu-484 is the Prevents secretion from ER element.

It belongs to the aldehyde dehydrogenase family. In terms of assembly, homodimer.

The protein localises to the membrane. Its subcellular location is the microsome membrane. It is found in the endoplasmic reticulum membrane. The enzyme catalyses an aldehyde + NAD(+) + H2O = a carboxylate + NADH + 2 H(+). It catalyses the reaction a fatty aldehyde + NAD(+) + H2O = a fatty acid + NADH + 2 H(+). It carries out the reaction hexadecanoate + NADH + 2 H(+) = hexadecanal + NAD(+) + H2O. The catalysed reaction is octanal + NAD(+) + H2O = octanoate + NADH + 2 H(+). The enzyme catalyses (2E)-hexadecenal + NAD(+) + H2O = (E)-hexadec-2-enoate + NADH + 2 H(+). It catalyses the reaction 22-oxodocosanoate + NAD(+) + H2O = docosanedioate + NADH + 2 H(+). It carries out the reaction 2,6,10,14-tetramethylpentadecanal + NAD(+) + H2O = 2,6,10,14-tetramethylpentadecanoate + NADH + 2 H(+). The catalysed reaction is octadecanal + NAD(+) + H2O = octadecanoate + NADH + 2 H(+). The enzyme catalyses dodecanoate + NADH + 2 H(+) = dodecanal + NAD(+) + H2O. It catalyses the reaction decanal + NAD(+) + H2O = decanoate + NADH + 2 H(+). It carries out the reaction tetradecanal + NAD(+) + H2O = tetradecanoate + NADH + 2 H(+). The catalysed reaction is heptanal + NAD(+) + H2O = heptanoate + NADH + 2 H(+). The enzyme catalyses (2E,6E)-farnesal + NAD(+) + H2O = (2E,6E)-farnesoate + NADH + 2 H(+). In terms of biological role, catalyzes the oxidation of medium and long-chain aliphatic aldehydes to fatty acids. Active on a variety of saturated and unsaturated aliphatic aldehydes between 6 and 24 carbons in length. Responsible for conversion of the sphingosine 1-phosphate (S1P) degradation product hexadecenal to hexadecenoic acid. In Mus musculus (Mouse), this protein is Aldehyde dehydrogenase family 3 member A2 (Aldh3a2).